The primary structure comprises 259 residues: Flagellar L-ring protein (259 aa).

A signal peptide spans 1 to 15; it reads MKRISLIALVTLMSG. Cys16 is lipidated: N-palmitoyl cysteine. The S-diacylglycerol cysteine moiety is linked to residue Cys16.

The protein belongs to the FlgH family. As to quaternary structure, the basal body constitutes a major portion of the flagellar organelle and consists of four rings (L,P,S, and M) mounted on a central rod.

It localises to the cell outer membrane. It is found in the bacterial flagellum basal body. Assembles around the rod to form the L-ring and probably protects the motor/basal body from shearing forces during rotation. This Vibrio vulnificus (strain YJ016) protein is Flagellar L-ring protein.